Here is a 396-residue protein sequence, read N- to C-terminus: Tryptophan synthase beta chain (396 aa).

An N6-(pyridoxal phosphate)lysine modification is found at lysine 86.

This sequence belongs to the TrpB family. As to quaternary structure, tetramer of two alpha and two beta chains. Pyridoxal 5'-phosphate serves as cofactor.

It carries out the reaction (1S,2R)-1-C-(indol-3-yl)glycerol 3-phosphate + L-serine = D-glyceraldehyde 3-phosphate + L-tryptophan + H2O. The protein operates within amino-acid biosynthesis; L-tryptophan biosynthesis; L-tryptophan from chorismate: step 5/5. The beta subunit is responsible for the synthesis of L-tryptophan from indole and L-serine. This Yersinia enterocolitica serotype O:8 / biotype 1B (strain NCTC 13174 / 8081) protein is Tryptophan synthase beta chain.